The primary structure comprises 466 residues: Glucose-6-phosphate 1-dehydrogenase 1 (466 aa).

NADP(+) contacts are provided by residues Ser-48, 88 to 89, and Lys-141; that span reads DV. Positions 171, 175, 209, and 228 each coordinate substrate. The active-site Proton acceptor is the His-233. Lys-319 and Lys-324 together coordinate substrate.

The protein belongs to the glucose-6-phosphate dehydrogenase family.

The enzyme catalyses D-glucose 6-phosphate + NADP(+) = 6-phospho-D-glucono-1,5-lactone + NADPH + H(+). It participates in carbohydrate degradation; pentose phosphate pathway; D-ribulose 5-phosphate from D-glucose 6-phosphate (oxidative stage): step 1/3. In terms of biological role, catalyzes the oxidation of glucose 6-phosphate to 6-phosphogluconolactone. This Mycobacterium tuberculosis (strain ATCC 25618 / H37Rv) protein is Glucose-6-phosphate 1-dehydrogenase 1.